A 180-amino-acid polypeptide reads, in one-letter code: Large ribosomal subunit protein uL5 (180 aa).

Belongs to the universal ribosomal protein uL5 family. Part of the 50S ribosomal subunit; part of the 5S rRNA/L5/L18/L25 subcomplex. Contacts the 5S rRNA and the P site tRNA. Forms a bridge to the 30S subunit in the 70S ribosome.

Its function is as follows. This is one of the proteins that bind and probably mediate the attachment of the 5S RNA into the large ribosomal subunit, where it forms part of the central protuberance. In the 70S ribosome it contacts protein S13 of the 30S subunit (bridge B1b), connecting the 2 subunits; this bridge is implicated in subunit movement. Contacts the P site tRNA; the 5S rRNA and some of its associated proteins might help stabilize positioning of ribosome-bound tRNAs. The sequence is that of Large ribosomal subunit protein uL5 from Lactobacillus delbrueckii subsp. bulgaricus (strain ATCC 11842 / DSM 20081 / BCRC 10696 / JCM 1002 / NBRC 13953 / NCIMB 11778 / NCTC 12712 / WDCM 00102 / Lb 14).